The chain runs to 729 residues: Transcriptional activator ptaB (729 aa).

The span at 1-12 (MPQHPGLPPGHP) shows a compositional bias: pro residues. Disordered regions lie at residues 1–69 (MPQH…QAHA), 207–341 (AAAA…QNQA), 505–538 (LELS…SLPE), and 614–729 (RGPQ…KGTA). Over residues 38–56 (PGGPQVTQGGPMMGMPPGA) the composition is skewed to low complexity. Residues 272–285 (APQPHPTPNPPPQQ) are compositionally biased toward pro residues. Low complexity-rich tracts occupy residues 286–300 (LPQA…HQQP) and 307–341 (QPQQ…QNQA). Residues 614 to 625 (RGPQMNGPNQFA) show a composition bias toward polar residues. The span at 655 to 671 (GPPGMVQQGQMQPNVGQ) shows a compositional bias: low complexity. Residues 672–682 (ATSASASPQVT) show a composition bias toward polar residues.

The protein belongs to the MFG1 family. Interacts with somA.

The protein localises to the nucleus. Its function is as follows. Transcriptional regulator that forms a complex with somA to control biofilm formation. This chain is Transcriptional activator ptaB, found in Aspergillus fumigatus (strain ATCC MYA-4609 / CBS 101355 / FGSC A1100 / Af293) (Neosartorya fumigata).